The chain runs to 236 residues: Ureidoacrylate amidohydrolase RutB (236 aa).

The active-site Proton acceptor is the Asp24. The active site involves Lys133. Cys166 acts as the Nucleophile in catalysis.

This sequence belongs to the isochorismatase family. RutB subfamily.

The enzyme catalyses (Z)-3-ureidoacrylate + H2O + H(+) = (Z)-3-aminoacrylate + NH4(+) + CO2. The catalysed reaction is (Z)-3-ureidoacrylate + H2O = (Z)-3-aminoacrylate + carbamate + H(+). It carries out the reaction (Z)-2-methylureidoacrylate + H2O + H(+) = (Z)-2-methylaminoacrylate + NH4(+) + CO2. Functionally, hydrolyzes ureidoacrylate to form aminoacrylate and carbamate. The carbamate hydrolyzes spontaneously, thereby releasing one of the nitrogen atoms of the pyrimidine ring as ammonia and one of its carbon atoms as CO2. This chain is Ureidoacrylate amidohydrolase RutB, found in Klebsiella pneumoniae (strain 342).